We begin with the raw amino-acid sequence, 183 residues long: NADH-quinone oxidoreductase subunit B (183 aa).

[4Fe-4S] cluster-binding residues include Cys-60, Cys-61, Cys-125, and Cys-154.

Belongs to the complex I 20 kDa subunit family. As to quaternary structure, NDH-1 is composed of 14 different subunits. Subunits NuoB, C, D, E, F, and G constitute the peripheral sector of the complex. The cofactor is [4Fe-4S] cluster.

It is found in the cell inner membrane. It carries out the reaction a quinone + NADH + 5 H(+)(in) = a quinol + NAD(+) + 4 H(+)(out). Functionally, NDH-1 shuttles electrons from NADH, via FMN and iron-sulfur (Fe-S) centers, to quinones in the respiratory chain. The immediate electron acceptor for the enzyme in this species is believed to be ubiquinone. Couples the redox reaction to proton translocation (for every two electrons transferred, four hydrogen ions are translocated across the cytoplasmic membrane), and thus conserves the redox energy in a proton gradient. This is NADH-quinone oxidoreductase subunit B from Desulfovibrio desulfuricans (strain ATCC 27774 / DSM 6949 / MB).